The following is a 430-amino-acid chain: S-adenosylmethionine synthase (430 aa).

Residue His14 coordinates ATP. A Mg(2+)-binding site is contributed by Asp16. Glu42 provides a ligand contact to K(+). L-methionine-binding residues include Glu55 and Gln98. Residues 98-108 (QSPDINRGVER) form a flexible loop region. ATP contacts are provided by residues 164–166 (DAK), 254–255 (KF), Asp263, 269–270 (RK), Ala286, and Lys290. Asp263 provides a ligand contact to L-methionine. Lys294 is a binding site for L-methionine.

It belongs to the AdoMet synthase family. As to quaternary structure, homotetramer; dimer of dimers. The cofactor is Mg(2+). K(+) serves as cofactor.

It is found in the cytoplasm. The catalysed reaction is L-methionine + ATP + H2O = S-adenosyl-L-methionine + phosphate + diphosphate. The protein operates within amino-acid biosynthesis; S-adenosyl-L-methionine biosynthesis; S-adenosyl-L-methionine from L-methionine: step 1/1. Catalyzes the formation of S-adenosylmethionine (AdoMet) from methionine and ATP. The overall synthetic reaction is composed of two sequential steps, AdoMet formation and the subsequent tripolyphosphate hydrolysis which occurs prior to release of AdoMet from the enzyme. This is S-adenosylmethionine synthase from Bacteroides thetaiotaomicron (strain ATCC 29148 / DSM 2079 / JCM 5827 / CCUG 10774 / NCTC 10582 / VPI-5482 / E50).